Reading from the N-terminus, the 489-residue chain is Hydantoin permease (489 aa).

12 helical membrane passes run 30–50 (FSLA…IAAG), 58–78 (VWQV…LLFF), 104–124 (LIPI…QTWL), 144–164 (LWIV…ITFI), 167–187 (MNVF…YLML), 207–227 (MPFS…VVSI), 258–278 (LGMV…MVLV), 299–321 (AILF…NLLS), 339–359 (GVIV…AGVL), 362–382 (FLNL…SDYF), 405–424 (RGVN…VSFL), and 428–445 (LMFV…IPAM). Positions 38 and 41 each coordinate Na(+). Position 121 (glutamine 121) interacts with substrate. Glycine 219 lines the substrate pocket. The Na(+) site is built by alanine 309, serine 312, and threonine 313. Asparagine 318 is a binding site for substrate. The disordered stretch occupies residues 468–489 (PIGPVAPADESATANTKEQNQR). The segment covering 479-489 (ATANTKEQNQR) has biased composition (polar residues).

It belongs to the purine-cytosine permease (2.A.39) family.

The protein localises to the membrane. Inhibited by dinitrophenol, 5-(2-naphthylmethyl)-D-hydantoin (D-NMH), 5-(2-naphthylmethyl)-L-hydantoin (L-NMH), 5-bromovinylhydantoin (BVH) and 5-indolylmethyl-L-hydantoin (L-IMH). The affinity of benzyl-hydantoin is increased over 10-fold in the presence of 15 mM of sodium. Its function is as follows. Nucleobase-proton symporter that mediates the sodium-dependent binding and uptake of 5-aryl-substituted hydantoin compounds. 5-indolyl methyl hydantoin and 5-benzyl hydantoin are the preferred substrates, with selectivity for a hydrophobic substituent in position 5 of hydantoin and for the L isomer over the D isomer. This is Hydantoin permease from Microbacterium maritypicum (Microbacterium liquefaciens).